The primary structure comprises 152 residues: Deoxyuridine 5'-triphosphate nucleotidohydrolase (152 aa).

Residues 71-73 (RSG), Asn-84, 88-90 (LID), and Met-98 each bind substrate.

This sequence belongs to the dUTPase family. It depends on Mg(2+) as a cofactor.

The enzyme catalyses dUTP + H2O = dUMP + diphosphate + H(+). Its pathway is pyrimidine metabolism; dUMP biosynthesis; dUMP from dCTP (dUTP route): step 2/2. Its function is as follows. This enzyme is involved in nucleotide metabolism: it produces dUMP, the immediate precursor of thymidine nucleotides and it decreases the intracellular concentration of dUTP so that uracil cannot be incorporated into DNA. This Enterobacter sp. (strain 638) protein is Deoxyuridine 5'-triphosphate nucleotidohydrolase.